The sequence spans 339 residues: Serine/arginine-rich splicing factor 6 (339 aa).

The RRM 1 domain maps to 2 to 72 (PRVYIGRLSY…ERVIVEHARG (71 aa)). Phosphoserine occurs at positions 45, 81, and 84. Residues 75-103 (RDRDGYSYGSRSGGGGYSSRRTSGRDKYG) are disordered. The 74-residue stretch at 110–183 (YRLIVENLSS…RNIRLIEDKP (74 aa)) folds into the RRM 2 domain. Position 165 is an N6-acetyllysine (Lys165). Positions 176–339 (IRLIEDKPRT…RSRSRSSSRD (164 aa)) are disordered. Residue Lys182 forms a Glycyl lysine isopeptide (Lys-Gly) (interchain with G-Cter in SUMO2) linkage. Residues 185 to 250 (TSHRRSYSGS…RKSRSKSKSK (66 aa)) show a composition bias toward basic residues. Basic and acidic residues predominate over residues 280-291 (SPKENGKGDIKS). Ser297 and Ser299 each carry phosphoserine. Ser303 is subject to Phosphoserine; by DYRK1A. A phosphoserine mark is found at Ser314 and Ser316. A compositionally biased stretch (basic residues) spans 321-339 (RASRSRSRSRSRSRSSSRD).

The protein belongs to the splicing factor SR family. As to quaternary structure, binds SREK1/SFRS12. Interacts with DYRK1A. Interacts with RBMY; the interaction inhibits SRSF6 pre-mRNA splicing. Post-translationally, extensively phosphorylated on serine residues in the RS domain. Phosphorylated by DYRK1A, probably in the RS domain. Phosphorylation by DYRK1A modulates alternative splice site selection and inhibits the expression of MAPT/Tau exon 10.

The protein resides in the nucleus. It is found in the nucleus speckle. Functionally, plays a role in constitutive splicing and modulates the selection of alternative splice sites. Plays a role in the alternative splicing of MAPT/Tau exon 10. Binds to alternative exons of TNC pre-mRNA and promotes the expression of alternatively spliced TNC. Plays a role in wound healing and in the regulation of keratinocyte differentiation and proliferation via its role in alternative splicing. This is Serine/arginine-rich splicing factor 6 (Srsf6) from Mus musculus (Mouse).